Consider the following 374-residue polypeptide: C-C chemokine receptor type 2 (374 aa).

Residues 1 to 42 (MLSTSRSRFIRNTNESGEEVTTFFDYDYGAPCHKFDVKQIGA) are Extracellular-facing. Asn-14 carries N-linked (GlcNAc...) asparagine glycosylation. Tyr-26 is modified (sulfotyrosine). The helical transmembrane segment at 43-70 (QLLPPLYSLVFIFGFVGNMLVVLILINC) threads the bilayer. Residues 71–80 (KKLKCLTDIY) lie on the Cytoplasmic side of the membrane. A helical transmembrane segment spans residues 81–100 (LLNLAISDLLFLITLPLWAH). The Extracellular segment spans residues 101-114 (SAANEWVFGNAMCK). Cys-113 and Cys-190 are disulfide-bonded. A helical transmembrane segment spans residues 115–136 (LFTGLYHIGYFGGIFFIILLTI). At 137-153 (DRYLAIVHAVFALKART) the chain is on the cytoplasmic side. At Tyr-139 the chain carries Phosphotyrosine; by JAK2. Residues 154–178 (VTFGVVTSVITWLVAVFASVPGIIF) form a helical membrane-spanning segment. Residues 179 to 206 (TKCQKEDSVYVCGPYFPRGWNNFHTIMR) lie on the Extracellular side of the membrane. A helical transmembrane segment spans residues 207-226 (NILGLVLPLLIMVICYSGIL). Topologically, residues 227-243 (KTLLRCRNEKKRHRAVR) are cytoplasmic. The helical transmembrane segment at 244–268 (VIFTIMIVYFLFWTPYNIVILLNTF) threads the bilayer. Residues 269–285 (QEFFGLSNCESTSQLDQ) lie on the Extracellular side of the membrane. Residues 286 to 309 (ATQVTETLGMTHCCINPIIYAFVG) form a helical membrane-spanning segment. The Cytoplasmic segment spans residues 310–374 (EKFRSLFHIA…EASLQDKEGA (65 aa)). A disordered region spans residues 348 to 374 (QGLLDGRGKGKSIGRAPEASLQDKEGA).

It belongs to the G-protein coupled receptor 1 family. In terms of assembly, interacts with ARRB1. Interacts (via extracellular N-terminal region) with beta-defensin DEFB106A/DEFB106B; this interaction may preferentially require specific tyrosine sulfation on CCR2. Interacts with NUP85; the interaction is required for CCR2 clusters formation on the cell membrane and CCR2 signaling. As to quaternary structure, (Microbial infection) Binds to HIV-1 Tat. Post-translationally, N-glycosylated. In terms of processing, sulfation increases the affinity for both monomeric and dimeric CCL2 with stronger binding to the monomeric form. Binding of sulfated CCR2 to CCL2 promotes conversion of CCL2 from dimer to monomer. As to expression, expressed by monocytes and IL2-activated NK cells. Abundantly expressed on CD14+/CD16- monocytes and weakly on CD14+/CD16+ monocytes, type 2 dendritic cells (DCs) and plasmacytoid DCs (at protein level).

Its subcellular location is the cell membrane. Its function is as follows. Key functional receptor for CCL2 but can also bind CCL7, and CCL12. Also transduces signaling mediated by CCL13. Its binding with CCL2 on monocytes and macrophages mediates chemotaxis and migration induction through the activation of the PI3K cascade, the small G protein Rac and lamellipodium protrusion. Also acts as a receptor for the beta-defensin DEFB106A/DEFB106B. Regulates the expression of T-cell inflammatory cytokines and T-cell differentiation, promoting the differentiation of T-cells into T-helper 17 cells (Th17) during inflammation. Facilitates the export of mature thymocytes by enhancing directional movement of thymocytes to sphingosine-1-phosphate stimulation and up-regulation of S1P1R expression; signals through the JAK-STAT pathway to regulate FOXO1 activity leading to an increased expression of S1P1R. Plays an important role in mediating peripheral nerve injury-induced neuropathic pain. Increases NMDA-mediated synaptic transmission in both dopamine D1 and D2 receptor-containing neurons, which may be caused by MAPK/ERK-dependent phosphorylation of GRIN2B/NMDAR2B. Mediates the recruitment of macrophages and monocytes to the injury site following brain injury. (Microbial infection) Alternative coreceptor with CD4 for HIV-1 infection. The polypeptide is C-C chemokine receptor type 2 (CCR2) (Homo sapiens (Human)).